Reading from the N-terminus, the 240-residue chain is Probable transcriptional regulatory protein HP_0162 (240 aa).

This sequence belongs to the TACO1 family.

The protein localises to the cytoplasm. This Helicobacter pylori (strain ATCC 700392 / 26695) (Campylobacter pylori) protein is Probable transcriptional regulatory protein HP_0162.